The sequence spans 663 residues: Spore germination protein GerIA (663 aa).

A compositionally biased stretch (basic residues) spans 1–13; the sequence is MIWNWLRKKKKSN. Residues 1-175 form a disordered region; sequence MIWNWLRKKK…SGGNSIYDFT (175 aa). A compositionally biased stretch (basic and acidic residues) spans 47–56; it reads KNNEQKDSSQ. Low complexity-rich tracts occupy residues 57-72, 88-101, and 122-150; these read DKQQ…QDKQ and PKQG…QQSA. 5 consecutive transmembrane segments (helical) span residues 414–434, 451–471, 491–511, 541–561, and 578–598; these read IFVD…DFFI, ILRL…VAVL, AQVP…IDLL, AGLT…ASFI, and FLAF…IFLF.

The protein belongs to the GerABKA family.

Its subcellular location is the cell membrane. In terms of biological role, required for inosine germination. The polypeptide is Spore germination protein GerIA (gerIA) (Bacillus cereus).